The sequence spans 498 residues: ATP synthase subunit beta, chloroplastic (498 aa).

172 to 179 is a binding site for ATP; the sequence is GGAGVGKT.

This sequence belongs to the ATPase alpha/beta chains family. As to quaternary structure, F-type ATPases have 2 components, CF(1) - the catalytic core - and CF(0) - the membrane proton channel. CF(1) has five subunits: alpha(3), beta(3), gamma(1), delta(1), epsilon(1). CF(0) has four main subunits: a(1), b(1), b'(1) and c(9-12).

It localises to the plastid. The protein localises to the chloroplast thylakoid membrane. It carries out the reaction ATP + H2O + 4 H(+)(in) = ADP + phosphate + 5 H(+)(out). Functionally, produces ATP from ADP in the presence of a proton gradient across the membrane. The catalytic sites are hosted primarily by the beta subunits. In Sorghum bicolor (Sorghum), this protein is ATP synthase subunit beta, chloroplastic.